We begin with the raw amino-acid sequence, 324 residues long: Lactonase drp35 (324 aa).

Ca(2+)-binding residues include glutamate 47, serine 109, glycine 111, aspartate 129, threonine 132, tyrosine 134, aspartate 137, asparagine 184, aspartate 235, and serine 236. Catalysis depends on aspartate 235, which acts as the Proton donor.

It belongs to the SMP-30/CGR1 family. Ca(2+) serves as cofactor.

It is found in the cytoplasm. In terms of biological role, exhibits lactonase activity. Acts in cells with perturbed membrane integrity and is possibly related to the membrane homeostasis. This Staphylococcus aureus (strain MRSA252) protein is Lactonase drp35 (drp35).